Reading from the N-terminus, the 1213-residue chain is DNA-directed RNA polymerase subunit beta' (1213 aa).

Residues C60, C62, C75, and C78 each coordinate Zn(2+). D450, D452, and D454 together coordinate Mg(2+). The Zn(2+) site is built by C819, C893, C900, and C903.

The protein belongs to the RNA polymerase beta' chain family. In terms of assembly, the RNAP catalytic core consists of 2 alpha, 1 beta, 1 beta' and 1 omega subunit. When a sigma factor is associated with the core the holoenzyme is formed, which can initiate transcription. The cofactor is Mg(2+). Zn(2+) is required as a cofactor.

The enzyme catalyses RNA(n) + a ribonucleoside 5'-triphosphate = RNA(n+1) + diphosphate. In terms of biological role, DNA-dependent RNA polymerase catalyzes the transcription of DNA into RNA using the four ribonucleoside triphosphates as substrates. This Streptococcus pyogenes serotype M18 (strain MGAS8232) protein is DNA-directed RNA polymerase subunit beta'.